The primary structure comprises 313 residues: MNATYRHITVLLEEAVSALAPREDGCYLDGTFGRGGHSRALLEKLGTGGRLLGFDKDPQAIQTGKALAAEDGRFVIVQRSFAELGDEVRARGLEGRVDGVLLDLGVSSPQLDDPERGFSFLNDGPLDMRMNPGQGISAAEFIANATEEEIARVFKVYGEERFAKRMARAIVQRRQERPFERTADLAEVITVANPAWEKGKNPATRAFQGLRIHVNNELGDLERGLDAALESLAVGGRLVVISFHSLEDRIVKLFMRKHAKGEADNLPRDLPIRSKVFEPRLKLLGKPQYASEEELKANPRSRSAVMRVAEKLR.

S-adenosyl-L-methionine-binding positions include 35–37 (GGH), aspartate 55, phenylalanine 81, aspartate 103, and glutamine 110.

The protein belongs to the methyltransferase superfamily. RsmH family.

It is found in the cytoplasm. It carries out the reaction cytidine(1402) in 16S rRNA + S-adenosyl-L-methionine = N(4)-methylcytidine(1402) in 16S rRNA + S-adenosyl-L-homocysteine + H(+). Specifically methylates the N4 position of cytidine in position 1402 (C1402) of 16S rRNA. The sequence is that of Ribosomal RNA small subunit methyltransferase H from Pseudomonas aeruginosa (strain UCBPP-PA14).